The primary structure comprises 43 residues: Protein PsbN (43 aa).

The chain crosses the membrane as a helical span at residues 7 to 29 (LSIALAAVCIGVTGYSIYLSFGP).

The protein belongs to the PsbN family.

The protein resides in the cellular thylakoid membrane. Functionally, may play a role in photosystem I and II biogenesis. This chain is Protein PsbN, found in Thermosynechococcus vestitus (strain NIES-2133 / IAM M-273 / BP-1).